The chain runs to 93 residues: Large ribosomal subunit protein uL23cz/uL23cy (93 aa).

This sequence belongs to the universal ribosomal protein uL23 family. Part of the 50S ribosomal subunit.

Its subcellular location is the plastid. It localises to the chloroplast. Binds to 23S rRNA. This Acorus calamus (Sweet flag) protein is Large ribosomal subunit protein uL23cz/uL23cy (rpl23-A).